The following is a 391-amino-acid chain: Lipid-A-disaccharide synthase (391 aa).

The protein belongs to the LpxB family.

It carries out the reaction a lipid X + a UDP-2-N,3-O-bis[(3R)-3-hydroxyacyl]-alpha-D-glucosamine = a lipid A disaccharide + UDP + H(+). It participates in bacterial outer membrane biogenesis; LPS lipid A biosynthesis. Condensation of UDP-2,3-diacylglucosamine and 2,3-diacylglucosamine-1-phosphate to form lipid A disaccharide, a precursor of lipid A, a phosphorylated glycolipid that anchors the lipopolysaccharide to the outer membrane of the cell. The sequence is that of Lipid-A-disaccharide synthase from Aromatoleum aromaticum (strain DSM 19018 / LMG 30748 / EbN1) (Azoarcus sp. (strain EbN1)).